The sequence spans 300 residues: Geranylgeranyl pyrophosphate synthase (300 aa).

M1 is subject to N-acetylmethionine. The isopentenyl diphosphate site is built by K25, R28, and H57. Residues D64 and D68 each contribute to the Mg(2+) site. R73 contacts dimethylallyl diphosphate. R74 is an isopentenyl diphosphate binding site. Dimethylallyl diphosphate contacts are provided by K151, T152, Q185, K202, and K212.

This sequence belongs to the FPP/GGPP synthase family. Homohexamer; trimer of homodimers. Mg(2+) is required as a cofactor.

It localises to the cytoplasm. It is found in the perinuclear region. Its subcellular location is the myofibril. The protein resides in the sarcomere. The protein localises to the z line. The enzyme catalyses isopentenyl diphosphate + dimethylallyl diphosphate = (2E)-geranyl diphosphate + diphosphate. It catalyses the reaction isopentenyl diphosphate + (2E)-geranyl diphosphate = (2E,6E)-farnesyl diphosphate + diphosphate. The catalysed reaction is isopentenyl diphosphate + (2E,6E)-farnesyl diphosphate = (2E,6E,10E)-geranylgeranyl diphosphate + diphosphate. The protein operates within isoprenoid biosynthesis; farnesyl diphosphate biosynthesis; farnesyl diphosphate from geranyl diphosphate and isopentenyl diphosphate: step 1/1. It functions in the pathway isoprenoid biosynthesis; geranyl diphosphate biosynthesis; geranyl diphosphate from dimethylallyl diphosphate and isopentenyl diphosphate: step 1/1. It participates in isoprenoid biosynthesis; geranylgeranyl diphosphate biosynthesis; geranylgeranyl diphosphate from farnesyl diphosphate and isopentenyl diphosphate: step 1/1. Its function is as follows. Catalyzes the trans-addition of the three molecules of isopentenyl diphosphate (IPP) onto dimethylallyl pyrophosphate (DMAPP) to form geranylgeranyl pyrophosphate, an important precursor of carotenoids and geranylated proteins. This chain is Geranylgeranyl pyrophosphate synthase, found in Mus musculus (Mouse).